Reading from the N-terminus, the 308-residue chain is Protein FdhE homolog (308 aa).

The protein belongs to the FdhE family.

The protein localises to the cytoplasm. Its function is as follows. Necessary for formate dehydrogenase activity. This is Protein FdhE homolog from Edwardsiella ictaluri (strain 93-146).